A 331-amino-acid chain; its full sequence is DNA-directed RNA polymerase subunit alpha (331 aa).

The alpha N-terminal domain (alpha-NTD) stretch occupies residues M1–N226. Residues T243–E331 are alpha C-terminal domain (alpha-CTD).

Belongs to the RNA polymerase alpha chain family. Homodimer. The RNAP catalytic core consists of 2 alpha, 1 beta, 1 beta' and 1 omega subunit. When a sigma factor is associated with the core the holoenzyme is formed, which can initiate transcription.

It carries out the reaction RNA(n) + a ribonucleoside 5'-triphosphate = RNA(n+1) + diphosphate. DNA-dependent RNA polymerase catalyzes the transcription of DNA into RNA using the four ribonucleoside triphosphates as substrates. In Bifidobacterium longum (strain NCC 2705), this protein is DNA-directed RNA polymerase subunit alpha.